We begin with the raw amino-acid sequence, 289 residues long: D-alanine aminotransferase (289 aa).

Residue tyrosine 31 participates in substrate binding. A pyridoxal 5'-phosphate-binding site is contributed by arginine 50. Substrate is bound by residues arginine 99 and histidine 101. The active-site Proton acceptor is lysine 147. N6-(pyridoxal phosphate)lysine is present on lysine 147. Residue glutamate 179 participates in pyridoxal 5'-phosphate binding.

It belongs to the class-IV pyridoxal-phosphate-dependent aminotransferase family. As to quaternary structure, homodimer. Requires pyridoxal 5'-phosphate as cofactor.

It catalyses the reaction D-alanine + 2-oxoglutarate = D-glutamate + pyruvate. Acts on the D-isomers of alanine, leucine, aspartate, glutamate, aminobutyrate, norvaline and asparagine. The enzyme transfers an amino group from a substrate D-amino acid to the pyridoxal phosphate cofactor to form pyridoxamine and an alpha-keto acid in the first half-reaction. The second half-reaction is the reverse of the first, transferring the amino group from the pyridoxamine to a second alpha-keto acid to form the product D-amino acid via a ping-pong mechanism. This is an important process in the formation of D-alanine and D-glutamate, which are essential bacterial cell wall components. The chain is D-alanine aminotransferase (dat) from Listeria innocua serovar 6a (strain ATCC BAA-680 / CLIP 11262).